The primary structure comprises 1020 residues: MESYLEENFGGVKAKNSSEEALRRWRKLCGVVKNPKRRFRFTANLDKRGEAQAIKHANHEKLRVAVLVSKAALQFIQGLSLRSEYVVPEEVKAAGFQICADELGSIVEGHDSKKLITHGGVTGIADKLATSPADGLSTAEESIKRRQDVYGLNKFTESEVRSFWVFVWEALQDTTLIILAVCAFVSLVVGIAMEGWPKGAHDGLGIVASILLVVFVTATSDYRQSLQFKDLDKEKKKIQVQVTRNGFRQRLSIYDLLPGDVVHLAIGDQVPADGLFISGFSLLINESSLTGESEPVVVNEDNPFLLSGTKVQDGSCKMLITTVGMRTQWGKLMATLSEGGDDETPLQVKLNGVATIIGKIGLFFAVITFIVLSQGLISKKYHEGLLLSWSGDDALEMLEHFAIAVTIVVVAVPEGLPLAVTLSLAFAMKKMMNDKALVRHLAACETMGSATTICSDKTGTLTTNHMTVVKACICGNIKEVNNPKNASDLCSELPETVVKTLLESIFNNTGGEVVIDQDGKYQILGTPTETALLEFALSLGGNFKAKRDETKIVKMEPFNSTKKRMCVVLKLPGGGCRAHCKGASEIVLAACDKFMDETGAVVPLDKTTADKLNGIIESFANEALRTLCLGYREMEEGFSVEEQIPLQGYTCIGIVGIKDPVRPGVRESVATCRSAGIMVRMVTGDNINTAKAIARECGILTEDGLAIEGPEFREKSLDELLKLIPKIQVMARSSPLDKHTLVKHLRTTFNEVVAVTGDGTNDAPALHEADIGLAMGIAGTEVAKESADVIILDDNFSTIVTVAKWGRSVYVNIQKFVQFQLTVNVVALLVNFSSACFTGNAPLTAVQLLWVNMIMDTLGALALATEPPNDDLMKREPVGRTGKFITNVMWRNILGQSFYQFIVMWYLQTQGKSMFGLDGPDAEVVLNTIIFNSFVFCQVFNEISSREMEKINVLRGILKNYVFLGVLTSTVVFQFIMVQFLGEFANTIPLTRLQWIASVLLGLIGMPISAIIKLLPVGSS.

Residues 1 to 175 lie on the Cytoplasmic side of the membrane; it reads MESYLEENFG…FVWEALQDTT (175 aa). The segment at 21-32 is interaction with calmodulin; sequence ALRRWRKLCGVV. 2 helical membrane passes run 176–196 and 199–219; these read LIIL…MEGW and GAHD…VTAT. The Cytoplasmic portion of the chain corresponds to 220 to 263; sequence SDYRQSLQFKDLDKEKKKIQVQVTRNGFRQRLSIYDLLPGDVVH. A run of 2 helical transmembrane segments spans residues 264–284 and 352–372; these read LAIG…SLLI and GVAT…FIVL. Topologically, residues 373–400 are cytoplasmic; it reads SQGLISKKYHEGLLLSWSGDDALEMLEH. The chain crosses the membrane as a helical span at residues 401–421; the sequence is FAIAVTIVVVAVPEGLPLAVT. The active-site 4-aspartylphosphate intermediate is Asp-456. Positions 758 and 762 each coordinate Mg(2+). A helical transmembrane segment spans residues 843 to 863; sequence LTAVQLLWVNMIMDTLGALAL. Residues 864-887 lie on the Cytoplasmic side of the membrane; that stretch reads ATEPPNDDLMKREPVGRTGKFITN. Helical transmembrane passes span 888–907 and 924–944; these read VMWR…MWYL and VVLN…NEIS. Over 945 to 961 the chain is Cytoplasmic; sequence SREMEKINVLRGILKNY. A run of 2 helical transmembrane segments spans residues 962-982 and 995-1015; these read VFLG…QFLG and WIAS…IKLL. The Cytoplasmic segment spans residues 1016 to 1020; sequence PVGSS.

Belongs to the cation transport ATPase (P-type) (TC 3.A.3) family. Type IIB subfamily.

Its subcellular location is the membrane. The enzyme catalyses Ca(2+)(in) + ATP + H2O = Ca(2+)(out) + ADP + phosphate + H(+). Activated by calmodulin. Functionally, this magnesium-dependent enzyme catalyzes the hydrolysis of ATP coupled with the translocation of calcium from the cytosol out of the cell, into the endoplasmic reticulum, or into organelles. This chain is Calcium-transporting ATPase 10, plasma membrane-type, found in Oryza sativa subsp. japonica (Rice).